The sequence spans 362 residues: S-adenosylmethionine:tRNA ribosyltransferase-isomerase (362 aa).

Belongs to the QueA family. In terms of assembly, monomer.

It localises to the cytoplasm. The enzyme catalyses 7-aminomethyl-7-carbaguanosine(34) in tRNA + S-adenosyl-L-methionine = epoxyqueuosine(34) in tRNA + adenine + L-methionine + 2 H(+). Its pathway is tRNA modification; tRNA-queuosine biosynthesis. Its function is as follows. Transfers and isomerizes the ribose moiety from AdoMet to the 7-aminomethyl group of 7-deazaguanine (preQ1-tRNA) to give epoxyqueuosine (oQ-tRNA). The polypeptide is S-adenosylmethionine:tRNA ribosyltransferase-isomerase (Yersinia enterocolitica serotype O:8 / biotype 1B (strain NCTC 13174 / 8081)).